We begin with the raw amino-acid sequence, 389 residues long: Flap endonuclease 1 (389 aa).

The interval Met-1–Arg-105 is N-domain. Residue Asp-34 participates in Mg(2+) binding. DNA is bound by residues Arg-47 and Arg-71. Positions 87, 170, 172, 191, and 193 each coordinate Mg(2+). The tract at residues Asp-134–His-265 is I-domain. A DNA-binding site is contributed by Glu-170. 2 residues coordinate DNA: Gly-243 and Asp-245. Residue Asp-245 coordinates Mg(2+). The segment at Pro-351–Phe-359 is interaction with PCNA. The tract at residues Lys-360–Lys-389 is disordered. Residues Met-362 to Lys-376 show a composition bias toward basic and acidic residues. The span at Thr-377–Lys-389 shows a compositional bias: basic residues.

It belongs to the XPG/RAD2 endonuclease family. FEN1 subfamily. As to quaternary structure, interacts with PCNA. Three molecules of FEN1 bind to one PCNA trimer with each molecule binding to one PCNA monomer. PCNA stimulates the nuclease activity without altering cleavage specificity. It depends on Mg(2+) as a cofactor. Phosphorylated. Phosphorylation upon DNA damage induces relocalization to the nuclear plasma.

The protein resides in the nucleus. It is found in the nucleolus. It localises to the nucleoplasm. The protein localises to the mitochondrion. In terms of biological role, structure-specific nuclease with 5'-flap endonuclease and 5'-3' exonuclease activities involved in DNA replication and repair. During DNA replication, cleaves the 5'-overhanging flap structure that is generated by displacement synthesis when DNA polymerase encounters the 5'-end of a downstream Okazaki fragment. It enters the flap from the 5'-end and then tracks to cleave the flap base, leaving a nick for ligation. Also involved in the long patch base excision repair (LP-BER) pathway, by cleaving within the apurinic/apyrimidinic (AP) site-terminated flap. Acts as a genome stabilization factor that prevents flaps from equilibrating into structures that lead to duplications and deletions. Also possesses 5'-3' exonuclease activity on nicked or gapped double-stranded DNA, and exhibits RNase H activity. Also involved in replication and repair of rDNA and in repairing mitochondrial DNA. The polypeptide is Flap endonuclease 1 (Yarrowia lipolytica (strain CLIB 122 / E 150) (Yeast)).